We begin with the raw amino-acid sequence, 307 residues long: Homoserine O-acetyltransferase (307 aa).

The active-site Acyl-thioester intermediate is the Cys142. Substrate-binding residues include Lys163 and Ser192. His235 acts as the Proton acceptor in catalysis. Glu237 is an active-site residue. Position 249 (Arg249) interacts with substrate.

This sequence belongs to the MetA family.

The protein resides in the cytoplasm. It carries out the reaction L-homoserine + acetyl-CoA = O-acetyl-L-homoserine + CoA. It participates in amino-acid biosynthesis; L-methionine biosynthesis via de novo pathway; O-acetyl-L-homoserine from L-homoserine: step 1/1. In terms of biological role, transfers an acetyl group from acetyl-CoA to L-homoserine, forming acetyl-L-homoserine. This Rhizobium leguminosarum bv. trifolii (strain WSM2304) protein is Homoserine O-acetyltransferase.